Consider the following 381-residue polypeptide: Cytochrome b (381 aa).

The next 4 helical transmembrane spans lie at 34 to 54, 78 to 99, 114 to 134, and 179 to 199; these read FGSH…FLAM, WLIR…YLHI, WNIG…GYVL, and FFAF…IHLL. Heme b-binding residues include His-84 and His-98. Heme b is bound by residues His-183 and His-197. His-202 lines the a ubiquinone pocket. Helical transmembrane passes span 227–247, 289–309, 321–341, and 348–368; these read YKDL…ALFM, LGGV…PLLH, MTQI…WIGG, and FIMV…IIMP.

Belongs to the cytochrome b family. The cytochrome bc1 complex contains 3 respiratory subunits (MT-CYB, CYC1 and UQCRFS1), 2 core proteins (UQCRC1 and UQCRC2) and probably 6 low-molecular weight proteins. Heme b serves as cofactor.

Its subcellular location is the mitochondrion inner membrane. Its function is as follows. Component of the ubiquinol-cytochrome c reductase complex (complex III or cytochrome b-c1 complex) that is part of the mitochondrial respiratory chain. The b-c1 complex mediates electron transfer from ubiquinol to cytochrome c. Contributes to the generation of a proton gradient across the mitochondrial membrane that is then used for ATP synthesis. This Carcharhinus porosus (Smalltail shark) protein is Cytochrome b (mt-cyb).